We begin with the raw amino-acid sequence, 883 residues long: Valine--tRNA ligase (883 aa).

A 'HIGH' region motif is present at residues 46–56 (PNVTGKLHLGH). A 'KMSKS' region motif is present at residues 520-524 (KMSKS). Lysine 523 is an ATP binding site. The stretch at 809-844 (LVDLLNVEEELARLEKELAKWQKELDMVGKKLSNER) forms a coiled coil.

Belongs to the class-I aminoacyl-tRNA synthetase family. ValS type 1 subfamily. Monomer.

The protein localises to the cytoplasm. The catalysed reaction is tRNA(Val) + L-valine + ATP = L-valyl-tRNA(Val) + AMP + diphosphate. Functionally, catalyzes the attachment of valine to tRNA(Val). As ValRS can inadvertently accommodate and process structurally similar amino acids such as threonine, to avoid such errors, it has a 'posttransfer' editing activity that hydrolyzes mischarged Thr-tRNA(Val) in a tRNA-dependent manner. The sequence is that of Valine--tRNA ligase from Streptococcus pneumoniae (strain ATCC BAA-255 / R6).